The primary structure comprises 89 residues: Small ribosomal subunit protein uS15 (89 aa).

It belongs to the universal ribosomal protein uS15 family. Part of the 30S ribosomal subunit. Forms a bridge to the 50S subunit in the 70S ribosome, contacting the 23S rRNA.

Its function is as follows. One of the primary rRNA binding proteins, it binds directly to 16S rRNA where it helps nucleate assembly of the platform of the 30S subunit by binding and bridging several RNA helices of the 16S rRNA. In terms of biological role, forms an intersubunit bridge (bridge B4) with the 23S rRNA of the 50S subunit in the ribosome. The chain is Small ribosomal subunit protein uS15 from Baumannia cicadellinicola subsp. Homalodisca coagulata.